The sequence spans 563 residues: Arginine--tRNA ligase (563 aa).

Residues 121–131 (PNIAKPFSIGH) carry the 'HIGH' region motif.

This sequence belongs to the class-I aminoacyl-tRNA synthetase family. As to quaternary structure, monomer.

The protein resides in the cytoplasm. The catalysed reaction is tRNA(Arg) + L-arginine + ATP = L-arginyl-tRNA(Arg) + AMP + diphosphate. The polypeptide is Arginine--tRNA ligase (Streptococcus pyogenes serotype M2 (strain MGAS10270)).